The following is a 389-amino-acid chain: MKIAVINSGSSSIKFKLYLMPQSIVLAHVHVEKIGETSSKITFRHTDKKEVFSNKIDTHHEGLRVINDILKEYQIIEHFSSLDAIAHRVVHGGDFFKSATLINEDVIYKIRELIPLSPLHNRANLEGILVSLKKAPSVPQIAVFDTSFHASLPKEAYLYALPYELYKEHKIRRFGFHGISHAYVLKKVAQEMQKNLHGLNMITLHLGNGSSACAIRNGKSVDTSMGFTPLEGLVMGSRSGDIDPQIVIYLQKELGYGLDEVEELLNRHSGLIGVCGEIDLREIIKRDDELSHVALDMMTRRVKKYIGAYMALLGRVDAIAFCAGIGENSSEVREKILKNLELFGIELDTKANEKNLTKISKQTSKIEVFVINTDEELEIALEAEALLRA.

Asn7 serves as a coordination point for Mg(2+). Lys14 is a binding site for ATP. Arg88 is a binding site for substrate. Asp145 serves as the catalytic Proton donor/acceptor. ATP is bound by residues 205–209 (HLGNG), 279–281 (DLR), and 324–328 (GIGEN). Glu375 is a Mg(2+) binding site.

The protein belongs to the acetokinase family. Homodimer. Mg(2+) serves as cofactor. Mn(2+) is required as a cofactor.

The protein resides in the cytoplasm. It catalyses the reaction acetate + ATP = acetyl phosphate + ADP. It functions in the pathway metabolic intermediate biosynthesis; acetyl-CoA biosynthesis; acetyl-CoA from acetate: step 1/2. Its function is as follows. Catalyzes the formation of acetyl phosphate from acetate and ATP. Can also catalyze the reverse reaction. This Sulfurimonas denitrificans (strain ATCC 33889 / DSM 1251) (Thiomicrospira denitrificans (strain ATCC 33889 / DSM 1251)) protein is Acetate kinase.